The sequence spans 167 residues: MRILAIDPAIRNTGYAVVEGDYRRARALDYGTLSIPRSVSQSGCLLAIKQHLGNLIDKWNPDEMAVERIIYVQSHQTAITMGAAKAAVVIAAAEAGLRIMEYSPKSVKLSVVGRGAAQKTQVAFMVRALLELRETPESDAADALAIGLTHLFSADPLKAHMMERKYI.

Residues Asp7, Glu67, and Asp139 contribute to the active site. Positions 7, 67, and 139 each coordinate Mg(2+).

This sequence belongs to the RuvC family. In terms of assembly, homodimer which binds Holliday junction (HJ) DNA. The HJ becomes 2-fold symmetrical on binding to RuvC with unstacked arms; it has a different conformation from HJ DNA in complex with RuvA. In the full resolvosome a probable DNA-RuvA(4)-RuvB(12)-RuvC(2) complex forms which resolves the HJ. Requires Mg(2+) as cofactor.

It is found in the cytoplasm. The catalysed reaction is Endonucleolytic cleavage at a junction such as a reciprocal single-stranded crossover between two homologous DNA duplexes (Holliday junction).. Functionally, the RuvA-RuvB-RuvC complex processes Holliday junction (HJ) DNA during genetic recombination and DNA repair. Endonuclease that resolves HJ intermediates. Cleaves cruciform DNA by making single-stranded nicks across the HJ at symmetrical positions within the homologous arms, yielding a 5'-phosphate and a 3'-hydroxyl group; requires a central core of homology in the junction. The consensus cleavage sequence is 5'-(A/T)TT(C/G)-3'. Cleavage occurs on the 3'-side of the TT dinucleotide at the point of strand exchange. HJ branch migration catalyzed by RuvA-RuvB allows RuvC to scan DNA until it finds its consensus sequence, where it cleaves and resolves the cruciform DNA. The sequence is that of Crossover junction endodeoxyribonuclease RuvC from Akkermansia muciniphila (strain ATCC BAA-835 / DSM 22959 / JCM 33894 / BCRC 81048 / CCUG 64013 / CIP 107961 / Muc).